Consider the following 238-residue polypeptide: Probable transcriptional regulatory protein SSU05_0402 (238 aa).

Belongs to the TACO1 family. YeeN subfamily.

Its subcellular location is the cytoplasm. The sequence is that of Probable transcriptional regulatory protein SSU05_0402 from Streptococcus suis (strain 05ZYH33).